Here is a 68-residue protein sequence, read N- to C-terminus: MPLVNIKLAKPSLSKEQKAELIADITELLSTKYNKSKERVVVVLEDVENYDIGFGGESVEAIKAKASK.

The active-site Proton acceptor; via imino nitrogen is the proline 2.

This sequence belongs to the 4-oxalocrotonate tautomerase family.

The polypeptide is Probable tautomerase Cj0270 (Campylobacter jejuni subsp. jejuni serotype O:2 (strain ATCC 700819 / NCTC 11168)).